The following is a 312-amino-acid chain: DNA-directed RNA polymerase subunit alpha (312 aa).

The alpha N-terminal domain (alpha-NTD) stretch occupies residues 1–229 (MLQYQIERID…ELFQPLATVT (229 aa)). The tract at residues 240–312 (PSPEAQIPLE…ISIPQSRTSV (73 aa)) is alpha C-terminal domain (alpha-CTD).

Belongs to the RNA polymerase alpha chain family. As to quaternary structure, in cyanobacteria the RNAP catalytic core is composed of 2 alpha, 1 beta, 1 beta', 1 gamma and 1 omega subunit. When a sigma factor is associated with the core the holoenzyme is formed, which can initiate transcription.

It catalyses the reaction RNA(n) + a ribonucleoside 5'-triphosphate = RNA(n+1) + diphosphate. Functionally, DNA-dependent RNA polymerase catalyzes the transcription of DNA into RNA using the four ribonucleoside triphosphates as substrates. The sequence is that of DNA-directed RNA polymerase subunit alpha from Prochlorococcus marinus (strain MIT 9301).